The following is a 243-amino-acid chain: Adenosine 5'-phosphosulfate reductase (243 aa).

The [4Fe-4S] cluster site is built by C126, C127, C209, and C212. The active-site Nucleophile; cysteine thiosulfonate intermediate is the C235.

This sequence belongs to the PAPS reductase family. CysH subfamily. It depends on [4Fe-4S] cluster as a cofactor.

The protein resides in the cytoplasm. The catalysed reaction is [thioredoxin]-disulfide + sulfite + AMP + 2 H(+) = adenosine 5'-phosphosulfate + [thioredoxin]-dithiol. The protein operates within sulfur metabolism; hydrogen sulfide biosynthesis; sulfite from sulfate. Catalyzes the formation of sulfite from adenosine 5'-phosphosulfate (APS) using thioredoxin as an electron donor. This chain is Adenosine 5'-phosphosulfate reductase, found in Staphylococcus epidermidis (strain ATCC 35984 / DSM 28319 / BCRC 17069 / CCUG 31568 / BM 3577 / RP62A).